The chain runs to 312 residues: DNA-directed RNA polymerase subunit alpha (312 aa).

The tract at residues Met1–Ser229 is alpha N-terminal domain (alpha-NTD). Residues Glu239–Ala312 are alpha C-terminal domain (alpha-CTD).

The protein belongs to the RNA polymerase alpha chain family. In cyanobacteria the RNAP catalytic core is composed of 2 alpha, 1 beta, 1 beta', 1 gamma and 1 omega subunit. When a sigma factor is associated with the core the holoenzyme is formed, which can initiate transcription.

The enzyme catalyses RNA(n) + a ribonucleoside 5'-triphosphate = RNA(n+1) + diphosphate. In terms of biological role, DNA-dependent RNA polymerase catalyzes the transcription of DNA into RNA using the four ribonucleoside triphosphates as substrates. The sequence is that of DNA-directed RNA polymerase subunit alpha from Prochlorococcus marinus (strain NATL1A).